The chain runs to 1656 residues: MGIADGQRRRSSSLRTQMFNKHLYDKYRGRTDDEIELEDINESKTFSGSDNNDKDDRDETSGNYAAEEDYEMEEYGSPDVSYSIITKILDTILDRRRTFHSKDGRHIPIILDHNAIEYKQAATKRDGHLIDERFNKPYCDNRITSSRYTFYSFLPRQLYAQFSKLANTYFFIVAVLQMIPGWSTTGTYTTIIPLCVFMGISMTREAWDDFRRHRLDKEENNKPVGVLVKDGNNDAQEVYTLPSSVVSSTAYLTKSAAAENNPPLNDDRNSSQGHFLDTHFNNFELLKNKYNVHIHQKKWEKLRVGDFVLLTQDDWVPADLLLLTCDGENSECFVETMALDGETNLKSKQPHPELNKLTKAASGLANINAQVTVEDPNIDLYNFEGNLELKNHRNDTIMKYPLGPDNVIYRGSILRNTQNVVGMVIFSGEETKIRMNALKNPRTKAPKLQRKINMIIVFMVFVVATISLFSYLGHVLHKKKYIDQNKAWYLFQADAGVAPTIMSFIIMYNTVIPLSLYVTMEIIKVVQSKMMEWDIDMYHAETNTPCESRTATILEELGQVSYIFSDKTGTLTDNKMIFRKFSLCGSSWLHNVDLGNSEDNFEDNRDNTNSLRLPPKAHNGSSIDVVSIGDQNVLDRLGFSDAPIEKGHRPSLDNFPKSRNSIEYKGNSSAIYTGRPSMRSLFGKDNSHLSKQASVISPSETFSENIKSSFDLIQFIQRYPTALFSQKAKFFFLSLALCHSCLPKKTHNESIGEDSIEYQSSSPDELALVTAARDLGYIVLNRNAQILTIKTFPDGFDGEAKLENYEILNYIDFNSQRKRMSVLVRMPNQPNQVLLICKGADNVIMERLHDRELAAKKMADICTSTKERKDAEAELVLQQRKSLERMVDEEAMARTSLRNSLSSVPRASLSLQAVRKSLSMKNSRTRDPEKQIDSIDQFLETVKKSDQEIGSVVNKSRKSLHKQQIEKYGPRISIDGTHFPNNNVPIDTRKEGLQHDYDTEILEHIGSDELILNEEYVIERTLQAIDEFSTEGLRTLVYAYKWIDIGQYENWNKRYHQAKTSLTDRKIKVDEAGAEIEDGLNLLGVTAIEDKLQDGVSEAIEKIRRAGIKMWMLTGDKRETAINIGYSCMLIKDYSTVVILTTTDENIISKMNAVSQEVDSGNIAHCVVVIDGATMAMFEGNPTYMSVFVELCTKTDSVICCRASPSQKALMVSNIRNTDPNLVTLAIGDGANDIAMIQSADIGVGIAGKEGLQASRVSDYSIGQFRFLLKLLFVHGRYNYIRTSKFMLCTFYKEITFYFTQLIYQRYTMFSGSSLYEPWSLSMFNTLFTSLPVLCIGMFEKDLKPMTLLTVPELYSYGRLSQGFNWLIFMEWVILATTNSLIITFLNVVMWGMSSLSDNTMYPLGLINFTAIVALINVKSQFVEMHNRNWLAFTSVVLSCGGWLVWCCALPILNNTDQIYDVAYGFYNHFGKDITFWCTSLVLALLPITLDIVYKTFKVMIWPSDSDIFAELEQKSDIRKKLELGAYSEMRQGWTWDKDPSTFTRYTDKVLSRPRTNSRASAKTHNSSIYSMSNGNVDHSSKKNFFGNSSKKSSERYEVLPSGKLIKRPSLKTQSSKDSIGGNITTKLTKKLKLPSRNVEDEDVNQIIQARLKDLE.

Topologically, residues 1–164 (MGIADGQRRR…PRQLYAQFSK (164 aa)) are lumenal. The tract at residues 36 to 74 (ELEDINESKTFSGSDNNDKDDRDETSGNYAAEEDYEMEE) is disordered. Positions 51–60 (NNDKDDRDET) are enriched in basic and acidic residues. Residues 165–185 (LANTYFFIVAVLQMIPGWSTT) traverse the membrane as a helical segment. The Cytoplasmic segment spans residues 186–451 (GTYTTIIPLC…RTKAPKLQRK (266 aa)). Residues 452–472 (INMIIVFMVFVVATISLFSYL) form a helical membrane-spanning segment. At 473–495 (GHVLHKKKYIDQNKAWYLFQADA) the chain is on the lumenal side. Residues 496 to 516 (GVAPTIMSFIIMYNTVIPLSL) traverse the membrane as a helical segment. Over 517–1157 (YVTMEIIKVV…ISKMNAVSQE (641 aa)) the chain is Cytoplasmic. The active-site 4-aspartylphosphate intermediate is Asp-566. Residues Asp-566, Lys-567, and Thr-568 each contribute to the ATP site. Asp-566 provides a ligand contact to Mg(2+). Thr-568 is a Mg(2+) binding site. Phosphoserine is present on Ser-627. ATP is bound by residues Glu-765, Phe-813, Ser-815, Lys-818, Lys-838, Arg-1034, Thr-1035, Thr-1114, Gly-1115, Asp-1116, 1167 to 1174 (VVVIDGAT), Arg-1202, and Lys-1208. Residues 1158-1178 (VDSGNIAHCVVVIDGATMAMF) form a helical membrane-spanning segment. Residues 1179–1318 (EGNPTYMSVF…MFSGSSLYEP (140 aa)) lie on the Lumenal side of the membrane. Asp-1229 contacts Mg(2+). ATP is bound by residues Asn-1232 and Asp-1233. The helical transmembrane segment at 1319-1339 (WSLSMFNTLFTSLPVLCIGMF) threads the bilayer. Over 1340-1365 (EKDLKPMTLLTVPELYSYGRLSQGFN) the chain is Cytoplasmic. The helical transmembrane segment at 1366–1386 (WLIFMEWVILATTNSLIITFL) threads the bilayer. Residues 1387–1395 (NVVMWGMSS) are Lumenal-facing. A helical membrane pass occupies residues 1396–1416 (LSDNTMYPLGLINFTAIVALI). Residues 1417-1432 (NVKSQFVEMHNRNWLA) lie on the Cytoplasmic side of the membrane. Residues 1433–1453 (FTSVVLSCGGWLVWCCALPIL) traverse the membrane as a helical segment. Over 1454 to 1473 (NNTDQIYDVAYGFYNHFGKD) the chain is Lumenal. The helical transmembrane segment at 1474-1494 (ITFWCTSLVLALLPITLDIVY) threads the bilayer. At 1495-1656 (KTFKVMIWPS…IIQARLKDLE (162 aa)) the chain is on the cytoplasmic side. A disordered region spans residues 1554–1576 (PRTNSRASAKTHNSSIYSMSNGN).

The protein belongs to the cation transport ATPase (P-type) (TC 3.A.3) family. Type IV subfamily. In terms of assembly, component of a flippase complex consisting of DNF3 and YNR048W/CRF1. Interacts with YNR048W/CRF1; the interaction is direct and required for proper expression and endoplasmic reticulum (ER) export of either partner. It depends on Mg(2+) as a cofactor.

It is found in the golgi apparatus. The protein localises to the trans-Golgi network membrane. Its subcellular location is the endosome membrane. The enzyme catalyses ATP + H2O + phospholipidSide 1 = ADP + phosphate + phospholipidSide 2.. The catalysed reaction is a 1,2-diacyl-sn-glycero-3-phosphocholine(out) + ATP + H2O = a 1,2-diacyl-sn-glycero-3-phosphocholine(in) + ADP + phosphate + H(+). It catalyses the reaction a 1,2-diacyl-sn-glycero-3-phosphoethanolamine(out) + ATP + H2O = a 1,2-diacyl-sn-glycero-3-phosphoethanolamine(in) + ADP + phosphate + H(+). In terms of biological role, catalytic component of a P4-ATPase flippase complex which catalyzes the hydrolysis of ATP coupled to the transport of phosphatidylcholine and small amounts of phosphatidylethanolamine from the lumen to the cytosolic leaflet of the trans-Golgi network and ensures the maintenance of asymmetric distribution of phospholipids. May be involved in transport from early endosomes to the trans-Golgi network (TGN). The chain is Probable phospholipid-transporting ATPase DNF3 (DNF3) from Saccharomyces cerevisiae (strain ATCC 204508 / S288c) (Baker's yeast).